The sequence spans 344 residues: FCS-Like Zinc finger 10 (344 aa).

The FLZ-type zinc finger occupies 270-314 (DFLSFCYGCSKKLGMGEDIYMYSGYKAFCSSECRSKEIDLDEEME). Acidic residues predominate over residues 309-320 (LDEEMEDGDEEE). The segment at 309-344 (LDEEMEDGDEEEAIKSVSSSDKESKKKSNGVFFTVG) is disordered.

The protein belongs to the FLZ family. In terms of assembly, interacts with KIN10 and KIN11 via its FLZ-type zinc finger domain. Interacts with KINB1, KINB2 and KINB3 via its N-terminal part. Forms homodimer and heterodimer with FLZ2 and FLZ12 in vitro. As to expression, early expressed in hypocotyl and cotyledon and preferentially in the stelar region of the shoot and root. Later expressed in root-shoot junction, lateral root, old or senescing leaves and in pistil and pollen of flower buds or open flowers.

It is found in the cytoplasm. The protein localises to the nucleus. Its subcellular location is the endoplasmic reticulum. May act as an adapter to facilitate the interaction of SnRK1 complex with effector proteins, conferring tissue- and stimulus-type specific differences in the SnRK1 regulation pathway. Negatively regulates KIN10 leading to a repression of the SnRK1 signaling pathway. This is FCS-Like Zinc finger 10 from Arabidopsis thaliana (Mouse-ear cress).